A 157-amino-acid chain; its full sequence is Trafficking protein particle complex subunit 6b (157 aa).

It belongs to the TRAPP small subunits family. BET3 subfamily. In terms of assembly, homodimer. Part of a TRAPP complex.

It is found in the golgi apparatus. The protein localises to the cis-Golgi network. It localises to the endoplasmic reticulum. Functionally, component of a transport protein particle (TRAPP) complex that may function in specific stages of inter-organelle traffic. Specifically involved in the early development of neural circuitry, likely by controlling the frequency and amplitude of intracellular calcium transients implicated in the regulation of neuron differentiation and survival. In Danio rerio (Zebrafish), this protein is Trafficking protein particle complex subunit 6b.